A 32-amino-acid chain; its full sequence is Calcitonin (32 aa).

Cysteine 1 and cysteine 7 are oxidised to a cystine. Proline 32 carries the proline amide modification.

This sequence belongs to the calcitonin family.

It is found in the secreted. In terms of biological role, calcitonin is a peptide hormone that causes a rapid but short-lived drop in the level of calcium and phosphate in blood by promoting the incorporation of those ions in the bones. Calcitonin function is mediated by the calcitonin receptor/CALCR and the CALCR-RAMP2 (AMYR2) receptor complex. This is Calcitonin (CALCA) from Sus scrofa (Pig).